Reading from the N-terminus, the 439-residue chain is Proline--tRNA ligase (439 aa).

The protein belongs to the class-II aminoacyl-tRNA synthetase family. ProS type 2 subfamily. As to quaternary structure, homodimer.

It localises to the cytoplasm. It carries out the reaction tRNA(Pro) + L-proline + ATP = L-prolyl-tRNA(Pro) + AMP + diphosphate. In terms of biological role, catalyzes the attachment of proline to tRNA(Pro) in a two-step reaction: proline is first activated by ATP to form Pro-AMP and then transferred to the acceptor end of tRNA(Pro). The protein is Proline--tRNA ligase of Parvibaculum lavamentivorans (strain DS-1 / DSM 13023 / NCIMB 13966).